Here is a 513-residue protein sequence, read N- to C-terminus: ATP synthase subunit alpha (513 aa).

169 to 176 (GDRQIGKT) contributes to the ATP binding site.

It belongs to the ATPase alpha/beta chains family. F-type ATPases have 2 components, CF(1) - the catalytic core - and CF(0) - the membrane proton channel. CF(1) has five subunits: alpha(3), beta(3), gamma(1), delta(1), epsilon(1). CF(0) has three main subunits: a(1), b(2) and c(9-12). The alpha and beta chains form an alternating ring which encloses part of the gamma chain. CF(1) is attached to CF(0) by a central stalk formed by the gamma and epsilon chains, while a peripheral stalk is formed by the delta and b chains.

The protein resides in the cell inner membrane. The enzyme catalyses ATP + H2O + 4 H(+)(in) = ADP + phosphate + 5 H(+)(out). Functionally, produces ATP from ADP in the presence of a proton gradient across the membrane. The alpha chain is a regulatory subunit. In Francisella tularensis subsp. tularensis (strain SCHU S4 / Schu 4), this protein is ATP synthase subunit alpha.